The following is an 858-amino-acid chain: Potassium transporter 7 (858 aa).

Acidic residues-rich tracts occupy residues 1–16 (MAEESSMEGSEKEEID) and 38–53 (QDDDDSEIGVDDDNDG). Residues 1–68 (MAEESSMEGS…LESDEDEIPE (68 aa)) form a disordered region. The Cytoplasmic segment spans residues 1 to 104 (MAEESSMEGS…DYEDLTVGRK (104 aa)). The helical transmembrane segment at 105-125 (VLLAFQTLGVVFGDVGTSPLY) threads the bilayer. Topologically, residues 126 to 147 (TFSVMFSKSPVQEKEDVIGALS) are extracellular. Residues 148–168 (LVLYTLLLVPLIKYVLVVLWA) traverse the membrane as a helical segment. Residues 169-232 (NDDGEGGTFA…KLENSLILKK (64 aa)) lie on the Cytoplasmic side of the membrane. The chain crosses the membrane as a helical span at residues 233–253 (ILLVLVLAGTSMVIADGVVTP). Residues 254-269 (AMSVMSAVGGLKVGVD) lie on the Extracellular side of the membrane. The chain crosses the membrane as a helical span at residues 270 to 290 (VVEQDQVVMISVAFLVILFSL). The Cytoplasmic segment spans residues 291–297 (QKYGTSK). A helical membrane pass occupies residues 298-318 (MGLVVGPALLIWFCSLAGIGI). Topologically, residues 319–345 (YNLIKYDSSVYRAFNPVHIYYFFKRNS) are extracellular. The chain crosses the membrane as a helical span at residues 346–366 (INAWYALGGCILCATGSEALF). Residues 367–380 (ADLCYFSVRSVQLT) are Cytoplasmic-facing. A helical transmembrane segment spans residues 381–401 (FVCLVLPCLMLGYMGQAAYLM). Over 402-413 (ENHADASQAFFS) the chain is Extracellular. A helical transmembrane segment spans residues 414–434 (SVPGSAFWPVLFIANIAALIA). Residues 435 to 470 (SRTMTTATFSCIKQSTALGCFPRLKIIHTSRKFMGQ) are Cytoplasmic-facing. Residues 471–491 (IYIPVLNWFLLAVCLVVVCSI) form a helical membrane-spanning segment. The Extracellular segment spans residues 492-496 (SSIDE). Residues 497–517 (IGNAYGMAELGVMMTTTILVT) form a helical membrane-spanning segment. Residue Leu518 is a topological domain, cytoplasmic. A helical transmembrane segment spans residues 519 to 539 (IMLLIWQINIVIVIAFLVVFL). Residues 540 to 552 (GVELVFFSSVIAS) are Extracellular-facing. Residues 553–573 (VGDGSWIILVFAVIMFGIMYI) form a helical membrane-spanning segment. Topologically, residues 574–858 (WNYGSKLRYE…LMQVGMTYMV (285 aa)) are cytoplasmic. The segment at 707–731 (QERSLESDGNDDSDSEEDFPGSRVV) is disordered. The span at 714–725 (DGNDDSDSEEDF) shows a compositional bias: acidic residues. A phosphoserine mark is found at Ser719 and Ser721.

It belongs to the HAK/KUP transporter (TC 2.A.72.3) family.

It is found in the cell membrane. In terms of biological role, probable potassium transporter. The sequence is that of Potassium transporter 7 (POT7) from Arabidopsis thaliana (Mouse-ear cress).